Reading from the N-terminus, the 101-residue chain is Small ribosomal subunit protein uS14 (101 aa).

The span at Met-1–Asn-10 shows a compositional bias: basic and acidic residues. The interval Met-1–Lys-23 is disordered. Positions Asn-11–Lys-23 are enriched in basic residues.

As to quaternary structure, part of the 30S ribosomal subunit. Contacts proteins S3 and S10.

In terms of biological role, binds 16S rRNA, required for the assembly of 30S particles and may also be responsible for determining the conformation of the 16S rRNA at the A site. The chain is Small ribosomal subunit protein uS14 from Rhodopseudomonas palustris (strain ATCC BAA-98 / CGA009).